The primary structure comprises 362 residues: Fiber protein (362 aa).

The protein belongs to the adenoviridae fiber family. In terms of assembly, homotrimer. Interacts with host receptor CXCAR. Interacts (via N-terminal tail region) with pentons.

The protein localises to the virion. Its subcellular location is the host nucleus. In terms of biological role, forms spikes that protrude from each vertex of the icosahedral capsid. Interacts with host receptor CXCAR to provide virion initial attachment to target cell. Fiber proteins are shed during virus entry, when virus is still at the cell surface. The polypeptide is Fiber protein (Homo sapiens (Human)).